We begin with the raw amino-acid sequence, 222 residues long: N-(5'-phosphoribosyl)anthranilate isomerase (222 aa).

This sequence belongs to the TrpF family.

It catalyses the reaction N-(5-phospho-beta-D-ribosyl)anthranilate = 1-(2-carboxyphenylamino)-1-deoxy-D-ribulose 5-phosphate. Its pathway is amino-acid biosynthesis; L-tryptophan biosynthesis; L-tryptophan from chorismate: step 3/5. This Brucella abortus (strain S19) protein is N-(5'-phosphoribosyl)anthranilate isomerase.